The chain runs to 537 residues: Immunoglobulin-like domain-containing receptor 1 (537 aa).

An N-terminal signal peptide occupies residues 1 to 22 (MGCGLLAAGLLLFTWLPAGCLS). Residues 23–161 (LLVTVQHTER…TSGDPDKEVK (139 aa)) form the Ig-like V-type domain. Residues 23-166 (LLVTVQHTER…DKEVKLIVLH (144 aa)) lie on the Extracellular side of the membrane. A disulfide bridge links C44 with C144. The helical transmembrane segment at 167–187 (WLTVIFIILGALLLLLLIGVC) threads the bilayer. Residues 188 to 537 (WCQCCPQYCC…SSHSGRSVVI (350 aa)) are Cytoplasmic-facing. Positions 333-537 (PPLIRDPPSS…SSHSGRSVVI (205 aa)) are disordered. The segment covering 341–357 (SSRTSNPSHQQRLNAVS) has biased composition (polar residues). Composition is skewed to basic and acidic residues over residues 359 to 380 (RHCDLSERPRQRHHSDFLRELQ) and 434 to 444 (RRPEPREGAQR). Over residues 480 to 490 (QRRHHHRRRRS) the composition is skewed to basic residues. Phosphoserine occurs at positions 490 and 492. Residues 518 to 530 (GNVERRLERESSH) are compositionally biased toward basic and acidic residues.

The protein belongs to the immunoglobulin superfamily. LISCH7 family. Homooligomer. Interacts with MARVELD2 and OCLN; the interaction is required to recruit MARVELD2 to tricellular contacts. Interacts (via C-terminus) with TRA2A, TRA2B and SRSF1. Interacts with PLSCR1. As to expression, expressed in the vestibule and in hair cells and supporting cells of the cochlea. Expressed in epithelial tissues. Highly expressed in colon but also detected in small intestine, bladder and lung. In colon, expressed in the upper portion of the crypts (at protein level). Expressed in CCK secretory cells of the proximal small intestine (at protein level). Expressed in the organ of Corti, stria vascularis, utricle and saccule of the inner ear.

It localises to the cell membrane. Its subcellular location is the cell junction. The protein resides in the tight junction. The protein localises to the nucleus. It is found in the cytoplasm. Functionally, maintains epithelial barrier function by recruiting MARVELD2/tricellulin to tricellular tight junctions (tTJs). Crucial for normal hearing by maintaining the structural and functional integrity of tTJs, which are critical for the survival of auditory neurosensory HCs. Mediates fatty acids and lipoproteins-stimulated CCK/cholecystokinin secretion in the small intestine. In the inner ear, may regulate alternative pre-mRNA splicing via binding to TRA2A, TRA2B and SRSF1. This chain is Immunoglobulin-like domain-containing receptor 1, found in Mus musculus (Mouse).